The sequence spans 213 residues: Phosphatidylserine decarboxylase proenzyme (213 aa).

S182 (schiff-base intermediate with substrate; via pyruvic acid) is an active-site residue. S182 carries the pyruvic acid (Ser); by autocatalysis modification.

Belongs to the phosphatidylserine decarboxylase family. PSD-A subfamily. As to quaternary structure, heterodimer of a large membrane-associated beta subunit and a small pyruvoyl-containing alpha subunit. It depends on pyruvate as a cofactor. Is synthesized initially as an inactive proenzyme. Formation of the active enzyme involves a self-maturation process in which the active site pyruvoyl group is generated from an internal serine residue via an autocatalytic post-translational modification. Two non-identical subunits are generated from the proenzyme in this reaction, and the pyruvate is formed at the N-terminus of the alpha chain, which is derived from the carboxyl end of the proenzyme. The post-translation cleavage follows an unusual pathway, termed non-hydrolytic serinolysis, in which the side chain hydroxyl group of the serine supplies its oxygen atom to form the C-terminus of the beta chain, while the remainder of the serine residue undergoes an oxidative deamination to produce ammonia and the pyruvoyl prosthetic group on the alpha chain.

The protein resides in the cell membrane. The catalysed reaction is a 1,2-diacyl-sn-glycero-3-phospho-L-serine + H(+) = a 1,2-diacyl-sn-glycero-3-phosphoethanolamine + CO2. The protein operates within phospholipid metabolism; phosphatidylethanolamine biosynthesis; phosphatidylethanolamine from CDP-diacylglycerol: step 2/2. In terms of biological role, catalyzes the formation of phosphatidylethanolamine (PtdEtn) from phosphatidylserine (PtdSer). The sequence is that of Phosphatidylserine decarboxylase proenzyme from Chlorobium phaeobacteroides (strain BS1).